A 457-amino-acid chain; its full sequence is Putative transposase y4bF (457 aa).

Residues 128 to 313 form the Integrase catalytic domain; the sequence is TFHQPRLRRE…RPLNLAPDRL (186 aa). Residues 406–440 are disordered; sequence QDERPAPKVRTNSEKNGYTPRGRKPGKRTDFMNDP.

In Sinorhizobium fredii (strain NBRC 101917 / NGR234), this protein is Putative transposase y4bF.